The following is a 233-amino-acid chain: Phytol kinase (233 aa).

6 consecutive transmembrane segments (helical) span residues 9–29, 56–76, 96–118, 122–144, 172–192, and 213–233; these read MALP…AVVL, VVLI…AGVF, VGRH…GGFF, LPIF…ALVG, FLVT…VLVV, and NLTV…LWLG.

It belongs to the polyprenol kinase family.

The protein localises to the cell membrane. The catalysed reaction is phytol + CTP = phytyl phosphate + CDP + H(+). It functions in the pathway cofactor biosynthesis; tocopherol biosynthesis. Its function is as follows. Catalyzes the CTP-dependent phosphorylation of phytol to phytylmonophosphate (PMP). Can also use UTP as an alternative phosphate donor, but not ATP or GTP. Is involved in tocopherol biosynthesis, via the utilization of phytol generated by chlorophyll degradation. Also plays a significant but not critical role in the recycling of phytol for the biosynthesis of new chlorophyll molecules. The chain is Phytol kinase from Synechocystis sp. (strain ATCC 27184 / PCC 6803 / Kazusa).